The chain runs to 280 residues: 4-deoxy-L-threo-5-hexosulose-uronate ketol-isomerase 1 (280 aa).

Zn(2+)-binding residues include histidine 198, histidine 200, glutamate 205, and histidine 247.

Belongs to the KduI family. Zn(2+) is required as a cofactor.

The enzyme catalyses 5-dehydro-4-deoxy-D-glucuronate = 3-deoxy-D-glycero-2,5-hexodiulosonate. Its pathway is glycan metabolism; pectin degradation; 2-dehydro-3-deoxy-D-gluconate from pectin: step 4/5. Catalyzes the isomerization of 5-dehydro-4-deoxy-D-glucuronate to 3-deoxy-D-glycero-2,5-hexodiulosonate. The chain is 4-deoxy-L-threo-5-hexosulose-uronate ketol-isomerase 1 (kduI1) from Bacteroides thetaiotaomicron (strain ATCC 29148 / DSM 2079 / JCM 5827 / CCUG 10774 / NCTC 10582 / VPI-5482 / E50).